The primary structure comprises 328 residues: GMP reductase (328 aa).

The active-site Thioimidate intermediate is the cysteine 176. Residue 205–228 (IIADGGIRTHGDIAKSIRFGASMI) participates in NADP(+) binding.

Belongs to the IMPDH/GMPR family. GuaC type 2 subfamily.

It carries out the reaction IMP + NH4(+) + NADP(+) = GMP + NADPH + 2 H(+). Its function is as follows. Catalyzes the irreversible NADPH-dependent deamination of GMP to IMP. It functions in the conversion of nucleobase, nucleoside and nucleotide derivatives of G to A nucleotides, and in maintaining the intracellular balance of A and G nucleotides. The polypeptide is GMP reductase (Streptococcus pneumoniae (strain Taiwan19F-14)).